Consider the following 736-residue polypeptide: Probable beta-glucosidase L (736 aa).

The N-terminal stretch at 1 to 21 (MNYRVPSLKATALAMAALTQA) is a signal peptide. N-linked (GlcNAc...) asparagine glycosylation is present at Asn-224. Asp-252 is an active-site residue. N-linked (GlcNAc...) asparagine glycosylation is found at Asn-295, Asn-363, Asn-429, and Asn-607.

Belongs to the glycosyl hydrolase 3 family.

The protein resides in the secreted. The enzyme catalyses Hydrolysis of terminal, non-reducing beta-D-glucosyl residues with release of beta-D-glucose.. The protein operates within glycan metabolism; cellulose degradation. Functionally, beta-glucosidases are one of a number of cellulolytic enzymes involved in the degradation of cellulosic biomass. Catalyzes the last step releasing glucose from the inhibitory cellobiose. This chain is Probable beta-glucosidase L (bglL), found in Aspergillus terreus (strain NIH 2624 / FGSC A1156).